Reading from the N-terminus, the 353-residue chain is MMTLKVCPSLLLLFLVHSVWTRTVRQVYNELDPEHWSHYTFECPQECFCPPSFPNALYCDNKGLKEIPAIPARIWYLYLQNNLIETISEKPFVNATHLRWINLNKNKITNNGIESGVLSKLKRLLYLFLEDNELEEVPAPLPVGLEQLRLARNKISRIPEGVFSNLENLTMLDLHQNNLLDSALQSDTFQGLNSLMQLNIAKNSLKKMPLSIPANTLQLFLDNNSIEVIPENYFSAIPKVTFLRLNYNKLSDDGIPPNGFNVSSILDLQLSHNQLTKIPPINAHLEHLHLDHNRIKSVNGTQICPVSIAVAEDYGLYGNIPRLRYLRLDGNEIQPPIPLDIMICFQLLQAVVI.

The signal sequence occupies residues 1–21 (MMTLKVCPSLLLLFLVHSVWT). In terms of domain architecture, LRRNT spans 34–72 (EHWSHYTFECPQECFCPPSFPNALYCDNKGLKEIPAIPA). Cystine bridges form between C43/C49 and C47/C59. 10 LRR repeats span residues 73–94 (RIWY…PFVN), 97–118 (HLRW…SGVL), 123–143 (RLLY…PLPV), 144–165 (GLEQ…VFSN), 168–188 (NLTM…QSDT), 194–214 (SLMQ…SIPA), 215–236 (NTLQ…YFSA), 239–262 (KVTF…GFNV), 264–283 (SILD…PINA), and 284–305 (HLEH…QICP). N-linked (GlcNAc...) (keratan sulfate) asparagine glycosylation occurs at N94. The N-linked (GlcNAc...) asparagine glycan is linked to N168. 2 N-linked (GlcNAc...) (keratan sulfate) asparagine glycosylation sites follow: N223 and N261. N299 carries an N-linked (GlcNAc...) asparagine glycan. An intrachain disulfide couples C304 to C344.

Belongs to the small leucine-rich proteoglycan (SLRP) family. SLRP class II subfamily. Post-translationally, binds keratan sulfate chains.

The protein resides in the secreted. The protein localises to the extracellular space. It is found in the extracellular matrix. Functionally, plays an important role in generating and maintaining a transparent matrix within the corneal stroma. In Gallus gallus (Chicken), this protein is Keratocan (KERA).